The chain runs to 531 residues: Transmembrane protein 266 (531 aa).

Over 1–102 the chain is Cytoplasmic; that stretch reads MALAASFNMT…VFLLSASLNS (102 aa). A helical membrane pass occupies residues 103–123; it reads FLVACVILVVILLTLELLIDI. Topologically, residues 124 to 129 are extracellular; the sequence is KLLQFS. A helical membrane pass occupies residues 130–150; the sequence is SAFQFAGVIHWISLVILSVFF. The Cytoplasmic segment spans residues 151–169; the sequence is SETVLRIVVLGIWDYIENK. The helical transmembrane segment at 170 to 190 threads the bilayer; sequence IEVFDGAVIILSLAPMVASTV. The Extracellular segment spans residues 191-199; sequence ANGPRSPWD. Residues 200-220 form a helical membrane-spanning segment; that stretch reads AISLIIMLRIWRVKRVIDAYV. Over 221-531 the chain is Cytoplasmic; the sequence is LPVKLEMEMV…EQKLHRVPEA (311 aa). A coiled-coil region spans residues 231–251; sequence IQQYEKAKVIQDEQLERLTQI. Positions 380-477 are disordered; the sequence is NGTGATSESA…PAGSAQTSPE (98 aa). The segment covering 383–412 has biased composition (polar residues); it reads GATSESASRSSVTRAQSDSSQTLGSSTDCS. Pro residues predominate over residues 421-431; the sequence is EPGPSPLPLPP.

In terms of assembly, homodimer; disulfide-linked.

It localises to the cell membrane. It is found in the cell projection. The protein localises to the dendrite. The protein resides in the perikaryon. In terms of biological role, voltage-sensor protein present on the post-synaptic side of glutamatergic mossy fibers and granule cells in the cerebellum. Despite the presence of a voltage-sensor segment, does not form a functional ion channel and its precise role remains unclear. Undergoes both rapid and slow structural rearrangements in response to changes in voltage. Contains a zinc-binding site that can regulate the slow conformational transition. This chain is Transmembrane protein 266, found in Macaca fascicularis (Crab-eating macaque).